We begin with the raw amino-acid sequence, 326 residues long: Tumor necrosis factor soluble receptor (326 aa).

The first 16 residues, 1–16 (MFRLTLLLAYVACVYG), serve as a signal peptide directing secretion. TNFR-Cys repeat units lie at residues 27–62 (KCRG…TVCS), 63–104 (PCKN…DRVC), 105–147 (DCSA…VLCT), and 148–186 (KCPR…TSCT). 10 disulfide bridges follow: Cys28/Cys39, Cys40/Cys53, Cys43/Cys61, Cys64/Cys79, Cys82/Cys96, Cys86/Cys104, Cys106/Cys120, Cys123/Cys146, Cys129/Cys149, and Cys164/Cys185. N-linked (GlcNAc...) asparagine; by host glycosylation is present at Asn66. N-linked (GlcNAc...) asparagine; by host glycosylation is found at Asn181, Asn205, and Asn238.

Binds to TNF-alpha and beta. Probably prevents TNF to reach cellular target and thereby deampening the potential antiviral effects of the cytokine. The protein is Tumor necrosis factor soluble receptor of Oryctolagus cuniculus (Rabbit).